Here is a 440-residue protein sequence, read N- to C-terminus: Murein DD-endopeptidase MepM (440 aa).

A helical membrane pass occupies residues 21–40; it reads VMLGSLTVLTLAVAVWRPYV. The region spanning 96–141 is the LysM domain; it reads HEYVVSTGDTLSSILNQYGIDMGDITQLAAADKELRNLKIGQQLSW. His-314 contributes to the Zn(2+) binding site.

Belongs to the peptidase M23B family. Zn(2+) is required as a cofactor.

It is found in the cell membrane. The protein operates within cell wall biogenesis; cell wall polysaccharide biosynthesis. Functionally, a murein DD-endopeptidase with specificity for D-Ala-meso-diaminopimelic acid (mDAP) cross-links. Its role is probably to cleave D-Ala-mDAP cross-links to allow insertion of new glycans and thus cell wall expansion. Functionally redundant with MepM and MepH. The protein is Murein DD-endopeptidase MepM (mepM) of Escherichia coli O6:H1 (strain CFT073 / ATCC 700928 / UPEC).